Here is a 397-residue protein sequence, read N- to C-terminus: Elongation factor Tu (397 aa).

The region spanning 10–206 (KPHVNIGTIG…AVDTSIPQPE (197 aa)) is the tr-type G domain. The interval 19 to 26 (GHIDHGKT) is G1. 19-26 (GHIDHGKT) contributes to the GTP binding site. A Mg(2+)-binding site is contributed by Thr-26. Residues 62 to 66 (GITIS) are G2. Positions 83-86 (DCPG) are G3. GTP is bound by residues 83-87 (DCPGH) and 138-141 (NKSD). Residues 138-141 (NKSD) form a G4 region. Positions 176–178 (SAL) are G5.

Belongs to the TRAFAC class translation factor GTPase superfamily. Classic translation factor GTPase family. EF-Tu/EF-1A subfamily. Monomer.

The protein resides in the cytoplasm. The catalysed reaction is GTP + H2O = GDP + phosphate + H(+). GTP hydrolase that promotes the GTP-dependent binding of aminoacyl-tRNA to the A-site of ribosomes during protein biosynthesis. This chain is Elongation factor Tu, found in Salinispora arenicola (strain CNS-205).